The primary structure comprises 235 residues: Small ribosomal subunit protein uS2 (235 aa).

This sequence belongs to the universal ribosomal protein uS2 family.

This chain is Small ribosomal subunit protein uS2, found in Anoxybacillus flavithermus (strain DSM 21510 / WK1).